We begin with the raw amino-acid sequence, 330 residues long: UPF0324 membrane protein PG_2004 (330 aa).

The next 9 helical transmembrane spans lie at 13-31, 36-58, 71-93, 97-114, 126-148, 158-180, 248-270, 285-307, and 312-329; these read IAYP…GSLV, PFTS…LIFG, VLLQ…LASG, MMFT…GWFI, SALI…GPIL, ALGT…GHWL, VPLF…EAYF, LTLS…VGVR, and GLFL…FILL.

It belongs to the UPF0324 family.

The protein localises to the cell membrane. This chain is UPF0324 membrane protein PG_2004, found in Porphyromonas gingivalis (strain ATCC BAA-308 / W83).